Here is a 327-residue protein sequence, read N- to C-terminus: Malate dehydrogenase (327 aa).

11 to 17 (GAAGQIS) contacts NAD(+). The substrate site is built by Arg92 and Arg98. NAD(+) contacts are provided by residues Asn105, Gln112, and 129–131 (VGN). Residues Asn131 and Arg162 each coordinate substrate. His187 serves as the catalytic Proton acceptor.

Belongs to the LDH/MDH superfamily. MDH type 2 family.

It carries out the reaction (S)-malate + NAD(+) = oxaloacetate + NADH + H(+). Its function is as follows. Catalyzes the reversible oxidation of malate to oxaloacetate. In Teredinibacter turnerae (strain ATCC 39867 / T7901), this protein is Malate dehydrogenase.